The sequence spans 862 residues: Chaperone protein ClpB 1 (862 aa).

The Clp R domain maps to 5–147 (AEQFTEQAWA…KEAITAVRGN (143 aa)). Repeat stretches follow at residues 8–72 (FTEQ…LQRL) and 84–147 (LGRS…VRGN). The interval 160-341 (ESLAKYGRDL…RRFQQVLVDQ (182 aa)) is NBD1. An ATP-binding site is contributed by 207–214 (GEPGVGKT). Residues 342 to 550 (PTVPDTISIL…IAEVIAKWTG (209 aa)) form a linker region. The stretch at 392–526 (IDLVDESAAR…QEDLLEDEDG (135 aa)) forms a coiled coil. Residues 560–771 (EMEKLLQLED…RLDDQIIFRS (212 aa)) form an NBD2 region. Position 610–617 (610–617 (GPTGVGKT)) interacts with ATP. The interval 772–862 (LEKEELRRIV…DAGDDKLSIS (91 aa)) is C-terminal.

It belongs to the ClpA/ClpB family. As to quaternary structure, homohexamer. The oligomerization is ATP-dependent.

The protein localises to the cytoplasm. Functionally, part of a stress-induced multi-chaperone system, it is involved in the recovery of the cell from heat-induced damage, in cooperation with DnaK, DnaJ and GrpE. Acts before DnaK, in the processing of protein aggregates. Protein binding stimulates the ATPase activity; ATP hydrolysis unfolds the denatured protein aggregates, which probably helps expose new hydrophobic binding sites on the surface of ClpB-bound aggregates, contributing to the solubilization and refolding of denatured protein aggregates by DnaK. This is Chaperone protein ClpB 1 (clpB1) from Parasynechococcus marenigrum (strain WH8102).